We begin with the raw amino-acid sequence, 261 residues long: MVETYHQPAPRSAATGLPVSMKIFMYLLTVFLITQMIGSALFAVYLHRRLDKIEDERNLHEDFVFMKTIQRCNTGERSLSLLNCEEIKSQFEGFVKDIMLNKEEKKKENSFEMQKGDQNPQIAAHVISEASSKTTSVLQWAEKGYYTMSNNLVTLENGKQLTVKRQGLYYIYAQVTFCSNREASSQAPFIASLCLKPPNRFERILLRAANTHSSAKPCGQQSIHLGGIFELQPGASVFVNVTDPSQVSHGTGFTSFGLLKL.

Residues 1 to 22 (MVETYHQPAPRSAATGLPVSMK) are Cytoplasmic-facing. A helical; Signal-anchor for type II membrane protein transmembrane segment spans residues 23–43 (IFMYLLTVFLITQMIGSALFA). Residues 44–261 (VYLHRRLDKI…GFTSFGLLKL (218 aa)) lie on the Extracellular side of the membrane. Residues 122 to 261 (IAAHVISEAS…GFTSFGLLKL (140 aa)) enclose the THD domain. A disulfide bond links Cys-178 and Cys-218. Asn-240 carries N-linked (GlcNAc...) asparagine glycosylation.

The protein belongs to the tumor necrosis factor family. Homotrimer. Interacts with CD28. CD40 ligand, soluble form: Exists as either a monomer or a homotrimer. Forms a ternary complex between CD40 and integrins for CD40-CD40LG signaling. Post-translationally, the soluble form derives from the membrane form by proteolytic processing.

The protein localises to the cell membrane. The protein resides in the cell surface. Its subcellular location is the secreted. Functionally, cytokine that acts as a ligand to CD40/TNFRSF5. Costimulates T-cell proliferation and cytokine production. Its cross-linking on T-cells generates a costimulatory signal which enhances the production of IL4 and IL10 in conjunction with the TCR/CD3 ligation and CD28 costimulation. Induces the activation of NF-kappa-B. Induces the activation of kinases MAPK8 and PAK2 in T-cells. Mediates B-cell proliferation in the absence of co-stimulus as well as IgE production in the presence of IL4. Involved in immunoglobulin class switching. Its function is as follows. Acts as a ligand for integrins, specifically ITGA5:ITGB1 and ITGAV:ITGB3; both integrins and the CD40 receptor are required for activation of CD40-CD40LG signaling, which have cell-type dependent effects, such as B-cell activation, NF-kappa-B signaling and anti-apoptotic signaling. The polypeptide is CD40 ligand (CD40LG) (Aotus trivirgatus (Three-striped night monkey)).